Reading from the N-terminus, the 111-residue chain is Secreted RxLR effector protein 82 (111 aa).

The N-terminal stretch at 1 to 17 (MFHLYLLLVFETRYTCL) is a signal peptide. The RxLR signature appears at 28-31 (RWLR).

It belongs to the RxLR effector family.

Its subcellular location is the secreted. It is found in the host nucleus. Secreted effector that acts as an elicitor that induces cell death in host plant cells. In Plasmopara viticola (Downy mildew of grapevine), this protein is Secreted RxLR effector protein 82.